Reading from the N-terminus, the 211-residue chain is Ubiquitin-conjugating enzyme E2 S-B (211 aa).

The UBC core domain maps to 11–157 (HIIRRVYKEV…ARLMTDIHAQ (147 aa)). The active-site Glycyl thioester intermediate is the Cys95. The segment at 158 to 211 (GTSLRGKDPTDPCSSASTPVVSGDGPMAKKHAGDRDKKLAAKKKTDKKRALRRL) is disordered. Positions 197–211 (AAKKKTDKKRALRRL) are enriched in basic residues.

This sequence belongs to the ubiquitin-conjugating enzyme family.

It carries out the reaction S-ubiquitinyl-[E1 ubiquitin-activating enzyme]-L-cysteine + [E2 ubiquitin-conjugating enzyme]-L-cysteine = [E1 ubiquitin-activating enzyme]-L-cysteine + S-ubiquitinyl-[E2 ubiquitin-conjugating enzyme]-L-cysteine.. The protein operates within protein modification; protein ubiquitination. In terms of biological role, catalyzes the covalent attachment of ubiquitin to other proteins. Acts as an essential factor of the anaphase promoting complex/cyclosome (APC/C), a cell cycle-regulated ubiquitin ligase that controls progression through mitosis. Acts by specifically elongating 'Lys-11'-linked polyubiquitin chains initiated by the E2 enzyme ube2c/ubch10 on APC/C substrates, enhancing the degradation of APC/C substrates by the proteasome and promoting mitotic exit. In Xenopus laevis (African clawed frog), this protein is Ubiquitin-conjugating enzyme E2 S-B (ube2s-b).